The following is a 428-amino-acid chain: Histidine--tRNA ligase (428 aa).

The protein belongs to the class-II aminoacyl-tRNA synthetase family. In terms of assembly, homodimer.

It localises to the cytoplasm. It carries out the reaction tRNA(His) + L-histidine + ATP = L-histidyl-tRNA(His) + AMP + diphosphate + H(+). The sequence is that of Histidine--tRNA ligase from Chlamydia trachomatis serovar A (strain ATCC VR-571B / DSM 19440 / HAR-13).